Here is a 1263-residue protein sequence, read N- to C-terminus: Condensin complex subunit dpy-26 (1263 aa).

The segment covering Met1–Thr10 has biased composition (polar residues). Positions Met1–Thr29 are disordered. Residues Asn691–Met725 adopt a coiled-coil conformation. 2 disordered regions span residues Tyr1098–Asn1118 and Phe1225–Glu1263. Positions Asn1106–Asn1118 are enriched in polar residues. Residues Arg1230–Arg1241 show a composition bias toward basic residues.

As to quaternary structure, component of the condensin I complex, which contains the mix-1/SMC2 and smc-4/SMC4 heterodimer, and three non SMC subunits that probably regulate the complex: dpy-26, capg-1 and dpy-28. Within the complex, interacts with dpy-28, mix-1, smc-4 and capg-1. Component of the dosage compensation complex, which consists of the condensin I-like components mix-1/SMC2 and dpy-27/SMC4, and the three non SMC subunits dpy-26, capg-1 and dpy-28. Within the complex, interacts with dpy-27, dpy-28, mix-1 and capg-1. The interaction with dpy-27 is required for dpy-27 protein stability. Interacts with smcl-1. As to expression, expressed in embryos and in somatic and germline tissues in L4 stage larvae (at protein level).

Its subcellular location is the nucleus. The protein resides in the chromosome. In terms of biological role, required for both chromosome condensation and segregation and for X-chromosome dosage compensation depending on its binding partners. Member of the condensin I complex, a complex required for conversion of interphase chromatin into mitotic-like condense chromosomes and for proper chromosome segregation in mitosis and meiosis. As a member of the condensin I complex, further controls the crossover number and distribution in meiosis by restricting double strand break formation, probably by influencing higher-order chromosome structure. Plays a role in robust cytokinesis upon presence of chromatin obstructions. Also a member of the condensin I-like dosage compensation complex that associates specifically with hermaphrodite X chromosomes to reduce their gene transcription during interphase, possibly through chromatin reorganization. As a member of the dosage compensation complex, also binds to regulatory regions of the autosomal her-1 gene, required for male development, possibly contributing to its repression in hermaphrodites. The protein is Condensin complex subunit dpy-26 of Caenorhabditis elegans.